A 105-amino-acid chain; its full sequence is Small cysteine and glycine repeat-containing protein 4 (105 aa).

The 14 X 2 AA repeats of CG stretch occupies residues 4 to 87; it reads CGCGSCGGCG…RRTCGSCGCG (84 aa).

The protein belongs to the KRTAP type 28 family.

In terms of biological role, in the hair cortex, hair keratin intermediate filaments are embedded in an interfilamentous matrix, consisting of hair keratin-associated proteins (KRTAP), which are essential for the formation of a rigid and resistant hair shaft through their extensive disulfide bond cross-linking with abundant cysteine residues of hair keratins. The matrix proteins include the high-sulfur and high-glycine-tyrosine keratins. This chain is Small cysteine and glycine repeat-containing protein 4, found in Homo sapiens (Human).